The following is a 361-amino-acid chain: Phospho-N-acetylmuramoyl-pentapeptide-transferase (361 aa).

The next 10 helical transmembrane spans lie at A26–E46, T71–A91, F97–Y117, I134–N154, G168–S188, G200–A220, G236–W256, I264–F284, V290–F310, and K338–L358.

The protein belongs to the glycosyltransferase 4 family. MraY subfamily. Requires Mg(2+) as cofactor.

The protein resides in the cell membrane. The enzyme catalyses UDP-N-acetyl-alpha-D-muramoyl-L-alanyl-gamma-D-glutamyl-meso-2,6-diaminopimeloyl-D-alanyl-D-alanine + di-trans,octa-cis-undecaprenyl phosphate = di-trans,octa-cis-undecaprenyl diphospho-N-acetyl-alpha-D-muramoyl-L-alanyl-D-glutamyl-meso-2,6-diaminopimeloyl-D-alanyl-D-alanine + UMP. It functions in the pathway cell wall biogenesis; peptidoglycan biosynthesis. Functionally, catalyzes the initial step of the lipid cycle reactions in the biosynthesis of the cell wall peptidoglycan: transfers peptidoglycan precursor phospho-MurNAc-pentapeptide from UDP-MurNAc-pentapeptide onto the lipid carrier undecaprenyl phosphate, yielding undecaprenyl-pyrophosphoryl-MurNAc-pentapeptide, known as lipid I. The sequence is that of Phospho-N-acetylmuramoyl-pentapeptide-transferase from Endomicrobium trichonymphae.